A 290-amino-acid chain; its full sequence is Picrinine-N-methytransferase TMT4 (290 aa).

Residues 71 to 80 (MLDVGCGIGG) form an SAM motif I region. The Vacuolar targeting signal signature appears at 133 to 139 (DGTFDVV). The interval 134–142 (GTFDVVFTI) is SAM motif II. An SAM motif III region spans residues 161–170 (VAAPGAAIVI).

It belongs to the class I-like SAM-binding methyltransferase superfamily. gTMT family. As to quaternary structure, homodimer.

It is found in the vacuole membrane. It carries out the reaction picrinine + S-adenosyl-L-methionine = ervincine + S-adenosyl-L-homocysteine + H(+). Its pathway is alkaloid biosynthesis; vindoline biosynthesis. S-adenosyl-L-methionine-dependent N-methyltransferase involved in the biosynthesis of biologically active monoterpenoid indole alkaloids (MIAs) natural products including vindoline. Catalyzes the conversion of picrinine to N-methylpicrinine (ervincine). In Catharanthus roseus (Madagascar periwinkle), this protein is Picrinine-N-methytransferase TMT4.